The sequence spans 351 residues: tRNA pseudouridine synthase D (351 aa).

D81 functions as the Nucleophile in the catalytic mechanism. The 147-residue stretch at 158–304 (GVPNYFGSQR…MRHERRAIEL (147 aa)) folds into the TRUD domain.

Belongs to the pseudouridine synthase TruD family.

The enzyme catalyses uridine(13) in tRNA = pseudouridine(13) in tRNA. Its function is as follows. Responsible for synthesis of pseudouridine from uracil-13 in transfer RNAs. This Aliivibrio fischeri (strain MJ11) (Vibrio fischeri) protein is tRNA pseudouridine synthase D.